A 149-amino-acid polypeptide reads, in one-letter code: NPC intracellular cholesterol transporter 2 (149 aa).

A signal peptide spans 1-19 (MHFLAAAFLLLTLSASALA). Intrachain disulfides connect cysteine 27–cysteine 140, cysteine 42–cysteine 47, and cysteine 93–cysteine 99. Asparagine 58 is a glycosylation site (N-linked (GlcNAc...) asparagine). An N6-acetyllysine modification is found at lysine 116.

Belongs to the NPC2 family. As to quaternary structure, interacts with NPC1 (via the second lumenal domain) in a cholestrol-dependent manner. Interacts with NUS1/NgBR, the interaction stabilizes NCP2 and regulates cholesterol trafficking. Interacts with DHDDS. Interacts with NEDD4L (via C2 domain). Interacts with NPC1L1. In terms of processing, N-glycosylated. Found in the epididymal fluid as a 19 kDa glycoprotein that is processed during its passage through the epididymis into a 16 kDa protein. Found in the fluid from the distal caput to cauda epididymis, not detected in the rete testis and the proximal and middle caput epididymal fluids (at protein level).

Its subcellular location is the secreted. The protein localises to the endoplasmic reticulum. The protein resides in the lysosome. The enzyme catalyses cholesterol(in) = cholesterol(out). Intracellular cholesterol transporter which acts in concert with NPC1 and plays an important role in the egress of cholesterol from the lysosomal compartment. Unesterified cholesterol that has been released from LDLs in the lumen of the late endosomes/lysosomes is transferred by NPC2 to the cholesterol-binding pocket in the N-terminal domain of NPC1. May bind and mobilize cholesterol that is associated with membranes. NPC2 binds cholesterol with a 1:1 stoichiometry. Can bind a variety of sterols, including lathosterol, desmosterol and the plant sterols stigmasterol and beta-sitosterol. The secreted form of NCP2 regulates biliary cholesterol secretion via stimulation of ABCG5/ABCG8-mediated cholesterol transport. This chain is NPC intracellular cholesterol transporter 2, found in Sus scrofa (Pig).